The following is a 391-amino-acid chain: RAB6A-GEF complex partner protein 2 (391 aa).

The protein belongs to the RGP1 family. Forms a complex with RIC1; the interaction enhances RAB6A GTPase activity. Interacts with RIC1. Interacts with RAB6A; the interaction is direct with a preference for RAB6A-GDP. Interacts with RAB33B.

It localises to the cytoplasm. It is found in the cytosol. The protein resides in the membrane. Functionally, the RIC1-RGP1 complex acts as a guanine nucleotide exchange factor (GEF), which activates RAB6A by exchanging bound GDP for free GTP and may thereby required for efficient fusion of endosome-derived vesicles with the Golgi compartment. The RIC1-RGP1 complex participates in the recycling of mannose-6-phosphate receptors. The polypeptide is RAB6A-GEF complex partner protein 2 (Homo sapiens (Human)).